The sequence spans 68 residues: Sec-independent protein translocase protein TatA (68 aa).

Residues 1–21 form a helical membrane-spanning segment; that stretch reads MGSFSIWHWLIVLAVVLLLFG. The disordered stretch occupies residues 42 to 68; it reads GMGDDEVASADKSVDGKTVDHKSDEVR. Residues 53–68 show a composition bias toward basic and acidic residues; sequence KSVDGKTVDHKSDEVR.

Belongs to the TatA/E family. As to quaternary structure, the Tat system comprises two distinct complexes: a TatABC complex, containing multiple copies of TatA, TatB and TatC subunits, and a separate TatA complex, containing only TatA subunits. Substrates initially bind to the TatABC complex, which probably triggers association of the separate TatA complex to form the active translocon.

The protein localises to the cell inner membrane. In terms of biological role, part of the twin-arginine translocation (Tat) system that transports large folded proteins containing a characteristic twin-arginine motif in their signal peptide across membranes. TatA could form the protein-conducting channel of the Tat system. The sequence is that of Sec-independent protein translocase protein TatA from Rhizobium meliloti (strain 1021) (Ensifer meliloti).